Reading from the N-terminus, the 225-residue chain is Thymidylate kinase (225 aa).

10-17 provides a ligand contact to ATP; that stretch reads GVEGGGKT.

This sequence belongs to the thymidylate kinase family.

The enzyme catalyses dTMP + ATP = dTDP + ADP. Phosphorylation of dTMP to form dTDP in both de novo and salvage pathways of dTTP synthesis. In Trichodesmium erythraeum (strain IMS101), this protein is Thymidylate kinase.